Here is a 350-residue protein sequence, read N- to C-terminus: Flap endonuclease 1 (350 aa).

Residues Met-1–Arg-102 form an N-domain region. Asp-31, Asp-84, Glu-156, Glu-158, Asp-177, Asp-179, and Asp-240 together coordinate Mg(2+). The tract at residues Ala-120 to Lys-262 is I-domain. The segment at Lys-341–Phe-349 is interaction with PCNA.

The protein belongs to the XPG/RAD2 endonuclease family. FEN1 subfamily. Interacts with PCNA. PCNA stimulates the nuclease activity without altering cleavage specificity. The cofactor is Mg(2+).

Structure-specific nuclease with 5'-flap endonuclease and 5'-3' exonuclease activities involved in DNA replication and repair. During DNA replication, cleaves the 5'-overhanging flap structure that is generated by displacement synthesis when DNA polymerase encounters the 5'-end of a downstream Okazaki fragment. Binds the unpaired 3'-DNA end and kinks the DNA to facilitate 5' cleavage specificity. Cleaves one nucleotide into the double-stranded DNA from the junction in flap DNA, leaving a nick for ligation. Also involved in the base excision repair (BER) pathway. Acts as a genome stabilization factor that prevents flaps from equilibrating into structures that lead to duplications and deletions. Also possesses 5'-3' exonuclease activity on nicked or gapped double-stranded DNA. The sequence is that of Flap endonuclease 1 from Staphylothermus marinus (strain ATCC 43588 / DSM 3639 / JCM 9404 / F1).